Here is a 40-residue protein sequence, read N- to C-terminus: Large ribosomal subunit protein bL36B (40 aa).

It belongs to the bacterial ribosomal protein bL36 family.

The chain is Large ribosomal subunit protein bL36B from Leifsonia xyli subsp. xyli (strain CTCB07).